The following is a 286-amino-acid chain: Cytotoxin (286 aa).

Positions T267–E286 are excised as a propeptide.

It belongs to the aerolysin family.

Its subcellular location is the secreted. In terms of biological role, cytotoxin is thought to form hydrophilic pores in cell membranes. The polypeptide is Cytotoxin (ctx) (Pseudomonas aeruginosa).